The following is a 509-amino-acid chain: Maturase K (509 aa).

This sequence belongs to the intron maturase 2 family. MatK subfamily.

It is found in the plastid. Its subcellular location is the chloroplast. Functionally, usually encoded in the trnK tRNA gene intron. Probably assists in splicing its own and other chloroplast group II introns. This chain is Maturase K, found in Pereskia aculeata (Barbados gooseberry).